Consider the following 313-residue polypeptide: Ribosomal protein L11 methyltransferase (313 aa).

Residues threonine 151, glycine 172, aspartate 194, and asparagine 245 each coordinate S-adenosyl-L-methionine.

It belongs to the methyltransferase superfamily. PrmA family.

The protein resides in the cytoplasm. The enzyme catalyses L-lysyl-[protein] + 3 S-adenosyl-L-methionine = N(6),N(6),N(6)-trimethyl-L-lysyl-[protein] + 3 S-adenosyl-L-homocysteine + 3 H(+). Its function is as follows. Methylates ribosomal protein L11. The polypeptide is Ribosomal protein L11 methyltransferase (Nitrosomonas europaea (strain ATCC 19718 / CIP 103999 / KCTC 2705 / NBRC 14298)).